The chain runs to 555 residues: Potassium-transporting ATPase potassium-binding subunit (555 aa).

10 helical membrane-spanning segments follow: residues 2–22, 60–80, 130–150, 173–193, 246–266, 278–298, 374–394, 412–432, 483–503, and 525–545; these read IWVA…PTGV, QYAL…YFIF, IGIT…VMAF, VFLP…VPQT, MSNI…PFTY, ILFV…TTSE, AGFV…GLMV, LIAV…ALAL, LVMF…AASL, and GIFI…MLVL.

The protein belongs to the KdpA family. As to quaternary structure, the system is composed of three essential subunits: KdpA, KdpB and KdpC.

Its subcellular location is the cell membrane. In terms of biological role, part of the high-affinity ATP-driven potassium transport (or Kdp) system, which catalyzes the hydrolysis of ATP coupled with the electrogenic transport of potassium into the cytoplasm. This subunit binds the extracellular potassium ions and delivers the ions to the membrane domain of KdpB through an intramembrane tunnel. The protein is Potassium-transporting ATPase potassium-binding subunit of Bacillus cereus (strain B4264).